Here is a 70-residue protein sequence, read N- to C-terminus: MTTIRVKENEPYEVALRRFKRTIEKLGLLTDLRAREFYEKPTSERKRKKAAAVKRHYKRVRSMQLPKKLY.

This sequence belongs to the bacterial ribosomal protein bS21 family.

The sequence is that of Small ribosomal subunit protein bS21 from Delftia acidovorans (strain DSM 14801 / SPH-1).